A 177-amino-acid polypeptide reads, in one-letter code: FCS-Like Zinc finger 1 (177 aa).

The segment covering 22-46 has biased composition (low complexity); sequence SLSEMEAGFSGNNNNSNNHGNPQNG. 2 disordered regions span residues 22-49 and 134-177; these read SLSEMEAGFSGNNNNSNNHGNPQNGVVS and ERDE…VAAA. The FLZ-type zinc-finger motif lies at 96 to 140; sequence HFLDSCFLCKKPLGDNRDIYMYRGDTPFCSEECRQEQIERDEAKE. Composition is skewed to basic and acidic residues over residues 134–143 and 154–168; these read ERDEAKEKKQ and RRKEQSSPTRSRDYA.

Belongs to the FLZ family. As to quaternary structure, interacts with KIN10 and KIN11 via its FLZ-type zinc finger domain. Interacts with KINB1, KINB2 and KINB3 via its N-terminal part. Interacts with DSP3 and BBX21 via its FLZ-type zinc finger domain. Forms heterodimer with FLZ7 and FLZ15 in vitro.

It is found in the nucleus. The protein resides in the cytoplasm. Its function is as follows. May act as an adapter to facilitate the interaction of SnRK1 complex with effector proteins, conferring tissue- and stimulus-type specific differences in the SnRK1 regulation pathway. This chain is FCS-Like Zinc finger 1, found in Arabidopsis thaliana (Mouse-ear cress).